The chain runs to 409 residues: FADH(2)-dependent resorcinol hydroxylase, oxygenase component (409 aa).

It belongs to the HpaH/HsaA monooxygenase family. In terms of assembly, the FADH(2)-dependent resorcinol hydroxylase is composed of two subunits, GraA (the oxygenase component) and GraD (the reductase component). Both subunits are required for activity.

The enzyme catalyses resorcinol + FADH2 + O2 = benzene-1,2,4-triol + FAD + H2O + H(+). Its pathway is aromatic compound metabolism. In terms of biological role, involved in the gamma-resorcylate (2,6-dihydroxybenzoate) catabolism. Oxygenase component of the resorcinol hydroxylase, which catalyzes the FADH(2)-dependent conversion of resorcinol to hydroxyquinol. In Rhizobium sp. (strain MTP-10005), this protein is FADH(2)-dependent resorcinol hydroxylase, oxygenase component.